The chain runs to 278 residues: Shikimate dehydrogenase (NADP(+)) (278 aa).

Shikimate-binding positions include 18–20 and threonine 65; that span reads SRS. The active-site Proton acceptor is lysine 69. Glutamate 80 is a binding site for NADP(+). 2 residues coordinate shikimate: asparagine 89 and aspartate 104. NADP(+) is bound by residues 129 to 133 and leucine 218; that span reads GAGGS. Position 220 (tyrosine 220) interacts with shikimate. Glycine 241 provides a ligand contact to NADP(+).

The protein belongs to the shikimate dehydrogenase family. Homodimer.

The enzyme catalyses shikimate + NADP(+) = 3-dehydroshikimate + NADPH + H(+). It functions in the pathway metabolic intermediate biosynthesis; chorismate biosynthesis; chorismate from D-erythrose 4-phosphate and phosphoenolpyruvate: step 4/7. Its function is as follows. Involved in the biosynthesis of the chorismate, which leads to the biosynthesis of aromatic amino acids. Catalyzes the reversible NADPH linked reduction of 3-dehydroshikimate (DHSA) to yield shikimate (SA). In Rhodopseudomonas palustris (strain TIE-1), this protein is Shikimate dehydrogenase (NADP(+)).